The following is a 204-amino-acid chain: Probable chorismate pyruvate-lyase (204 aa).

Substrate contacts are provided by R78, L131, and E190.

This sequence belongs to the UbiC family.

Its subcellular location is the cytoplasm. It catalyses the reaction chorismate = 4-hydroxybenzoate + pyruvate. It participates in cofactor biosynthesis; ubiquinone biosynthesis. In terms of biological role, removes the pyruvyl group from chorismate, with concomitant aromatization of the ring, to provide 4-hydroxybenzoate (4HB) for the ubiquinone pathway. This chain is Probable chorismate pyruvate-lyase, found in Shewanella frigidimarina (strain NCIMB 400).